The following is a 228-amino-acid chain: Large ribosomal subunit protein uL1 (228 aa).

The protein belongs to the universal ribosomal protein uL1 family. As to quaternary structure, part of the 50S ribosomal subunit.

Functionally, binds directly to 23S rRNA. The L1 stalk is quite mobile in the ribosome, and is involved in E site tRNA release. Its function is as follows. Protein L1 is also a translational repressor protein, it controls the translation of the L11 operon by binding to its mRNA. The chain is Large ribosomal subunit protein uL1 from Clavibacter michiganensis subsp. michiganensis (strain NCPPB 382).